Reading from the N-terminus, the 156-residue chain is Small ribosomal subunit protein uS7 (156 aa).

This sequence belongs to the universal ribosomal protein uS7 family. Part of the 30S ribosomal subunit. Contacts proteins S9 and S11.

In terms of biological role, one of the primary rRNA binding proteins, it binds directly to 16S rRNA where it nucleates assembly of the head domain of the 30S subunit. Is located at the subunit interface close to the decoding center, probably blocks exit of the E-site tRNA. The protein is Small ribosomal subunit protein uS7 of Leptothrix cholodnii (strain ATCC 51168 / LMG 8142 / SP-6) (Leptothrix discophora (strain SP-6)).